The primary structure comprises 291 residues: Polyamine aminopropyltransferase (291 aa).

In terms of domain architecture, PABS spans 5–245 (PGPISLIEPL…YAVNYILGSL (241 aa)). Gln-36 contacts S-methyl-5'-thioadenosine. Spermidine-binding residues include His-67 and Glu-91. S-methyl-5'-thioadenosine is bound by residues Asp-111 and 143–144 (DG). Asp-164 (proton acceptor) is an active-site residue.

This sequence belongs to the spermidine/spermine synthase family. As to quaternary structure, homodimer or homotetramer.

Its subcellular location is the cytoplasm. It catalyses the reaction S-adenosyl 3-(methylsulfanyl)propylamine + putrescine = S-methyl-5'-thioadenosine + spermidine + H(+). It participates in amine and polyamine biosynthesis; spermidine biosynthesis; spermidine from putrescine: step 1/1. Functionally, catalyzes the irreversible transfer of a propylamine group from the amino donor S-adenosylmethioninamine (decarboxy-AdoMet) to putrescine (1,4-diaminobutane) to yield spermidine. This Pyrobaculum neutrophilum (strain DSM 2338 / JCM 9278 / NBRC 100436 / V24Sta) (Thermoproteus neutrophilus) protein is Polyamine aminopropyltransferase.